The chain runs to 479 residues: ATP synthase subunit beta (479 aa).

168-175 provides a ligand contact to ATP; that stretch reads GGAGVGKT.

It belongs to the ATPase alpha/beta chains family. As to quaternary structure, F-type ATPases have 2 components, CF(1) - the catalytic core - and CF(0) - the membrane proton channel. CF(1) has five subunits: alpha(3), beta(3), gamma(1), delta(1), epsilon(1). CF(0) has three main subunits: a(1), b(2) and c(9-12). The alpha and beta chains form an alternating ring which encloses part of the gamma chain. CF(1) is attached to CF(0) by a central stalk formed by the gamma and epsilon chains, while a peripheral stalk is formed by the delta and b chains.

It localises to the cell membrane. The catalysed reaction is ATP + H2O + 4 H(+)(in) = ADP + phosphate + 5 H(+)(out). Produces ATP from ADP in the presence of a proton gradient across the membrane. The catalytic sites are hosted primarily by the beta subunits. The protein is ATP synthase subunit beta of Parafrankia sp. (strain EAN1pec).